We begin with the raw amino-acid sequence, 391 residues long: Alkanesulfonate monooxygenase (391 aa).

Belongs to the SsuD family.

The enzyme catalyses an alkanesulfonate + FMNH2 + O2 = an aldehyde + FMN + sulfite + H2O + 2 H(+). In terms of biological role, catalyzes the desulfonation of aliphatic sulfonates. This Paracidovorax citrulli (strain AAC00-1) (Acidovorax citrulli) protein is Alkanesulfonate monooxygenase.